The following is a 321-amino-acid chain: Methionyl-tRNA formyltransferase (321 aa).

111-114 (SLLP) contributes to the (6S)-5,6,7,8-tetrahydrofolate binding site.

Belongs to the Fmt family.

The catalysed reaction is L-methionyl-tRNA(fMet) + (6R)-10-formyltetrahydrofolate = N-formyl-L-methionyl-tRNA(fMet) + (6S)-5,6,7,8-tetrahydrofolate + H(+). Functionally, attaches a formyl group to the free amino group of methionyl-tRNA(fMet). The formyl group appears to play a dual role in the initiator identity of N-formylmethionyl-tRNA by promoting its recognition by IF2 and preventing the misappropriation of this tRNA by the elongation apparatus. The polypeptide is Methionyl-tRNA formyltransferase (Bifidobacterium animalis subsp. lactis (strain AD011)).